The primary structure comprises 435 residues: Nuclear hormone receptor family member nhr-28 (435 aa).

Positions lysine 5–arginine 80 form a DNA-binding region, nuclear receptor. 2 NR C4-type zinc fingers span residues cysteine 8–cysteine 28 and cysteine 44–cysteine 63. The interval leucine 84–methionine 106 is disordered. A compositionally biased stretch (polar residues) spans serine 91–tryptophan 104. Positions isoleucine 113–arginine 374 constitute an NR LBD domain.

Belongs to the nuclear hormone receptor family.

The protein resides in the nucleus. Functionally, orphan nuclear receptor. The protein is Nuclear hormone receptor family member nhr-28 of Caenorhabditis briggsae.